A 413-amino-acid chain; its full sequence is Palmitoyltransferase ZDHHC6 (413 aa).

Topologically, residues 1-24 are cytoplasmic; that stretch reads MGTFCSVVKFENLQELKRLCHWGP. A helical transmembrane segment spans residues 25–45; the sequence is IIALGVIAICSAMAMIDSVLW. The Lumenal segment spans residues 46 to 57; it reads YWPLHTTGGSVN. The helical transmembrane segment at 58-78 threads the bilayer; that stretch reads FIMLINWTVMILYNYFNAMFV. The Cytoplasmic portion of the chain corresponds to 79–143; the sequence is GPGFVPLGWK…NCCGYQNHAS (65 aa). Residues 99–149 form the DHHC domain; that stretch reads QYCKVCQAYKAPRSHHCRKCNRCVMKMDHHCPWINNCCGYQNHASFTLFLL. Catalysis depends on cysteine 129, which acts as the S-palmitoyl cysteine intermediate. Residues 144 to 164 traverse the membrane as a helical segment; the sequence is FTLFLLLAPLGCIHAAFIFVM. The Lumenal portion of the chain corresponds to 165-194; the sequence is TMYTQLYNRLSFGWNTVKIDMSAARRDPLP. The chain crosses the membrane as a helical span at residues 195-215; the sequence is IIPFGLAAFAATLFALGLALG. Residues 216 to 413 are Cytoplasmic-facing; sequence TTIAVGMLFF…QAPEGEKKNR (198 aa). Positions 313–398 constitute an SH3 domain; it reads VRSVRYKVIE…PRNCVEKCPC (86 aa). Residues cysteine 328, cysteine 329, and cysteine 343 are each lipidated (S-palmitoyl cysteine). Residues 410 to 413 carry the Di-lysine motif motif; the sequence is KKNR.

Belongs to the DHHC palmitoyltransferase family. In terms of assembly, homooligomerizes. Interacts with SELENOK. Post-translationally, palmitoylated at 3 different sites by ZDHHC16. The combination of the different palmitoylation events strongly affects the quaternary assembly of ZDHHC6, its localization, stability and function. Palmitoylation at Cys-328 accelerates the turnover of ZDHHC6. Depalmitoylated by LYPLA2.

It is found in the endoplasmic reticulum membrane. It catalyses the reaction L-cysteinyl-[protein] + hexadecanoyl-CoA = S-hexadecanoyl-L-cysteinyl-[protein] + CoA. The catalysed reaction is L-cysteinyl-[protein] + octadecanoyl-CoA = S-octadecanoyl-L-cysteinyl-[protein] + CoA. In terms of biological role, endoplasmic reticulum palmitoyl acyltransferase that mediates palmitoylation of proteins such as AMFR, CALX, ITPR1 and TFRC. Palmitoylates calnexin (CALX), which is required for its association with the ribosome-translocon complex and efficient folding of glycosylated proteins. Mediates palmitoylation of AMFR, promoting AMFR distribution to the peripheral endoplasmic reticulum. Together with SELENOK, palmitoylates ITPR1 in immune cells, leading to regulate ITPR1 stability and function. Stearoyltransferase that mediates stearoylation of TFRC to inhibit TFRC-mediated activation of the JNK pathway and mitochondrial fragmentation. The protein is Palmitoyltransferase ZDHHC6 of Bos taurus (Bovine).